The chain runs to 205 residues: Methylthioribulose-1-phosphate dehydratase (205 aa).

Zn(2+)-binding residues include H94 and H96.

Belongs to the aldolase class II family. MtnB subfamily. Zn(2+) is required as a cofactor.

It catalyses the reaction 5-(methylsulfanyl)-D-ribulose 1-phosphate = 5-methylsulfanyl-2,3-dioxopentyl phosphate + H2O. The protein operates within amino-acid biosynthesis; L-methionine biosynthesis via salvage pathway; L-methionine from S-methyl-5-thio-alpha-D-ribose 1-phosphate: step 2/6. Its function is as follows. Catalyzes the dehydration of methylthioribulose-1-phosphate (MTRu-1-P) into 2,3-diketo-5-methylthiopentyl-1-phosphate (DK-MTP-1-P). The chain is Methylthioribulose-1-phosphate dehydratase from Pectobacterium carotovorum subsp. carotovorum (strain PC1).